A 68-amino-acid polypeptide reads, in one-letter code: Large ribosomal subunit protein uL29 (68 aa).

It belongs to the universal ribosomal protein uL29 family.

The chain is Large ribosomal subunit protein uL29 from Streptococcus sanguinis (strain SK36).